The chain runs to 488 residues: 3-octaprenyl-4-hydroxybenzoate carboxy-lyase (488 aa).

Position 172 (asparagine 172) interacts with Mn(2+). Residues 175-177 (IYR), 189-191 (RWL), and 194-195 (RG) each bind prenylated FMN. Position 238 (glutamate 238) interacts with Mn(2+). Aspartate 287 serves as the catalytic Proton donor.

Belongs to the UbiD family. In terms of assembly, homohexamer. It depends on prenylated FMN as a cofactor. The cofactor is Mn(2+).

It localises to the cell membrane. The enzyme catalyses a 4-hydroxy-3-(all-trans-polyprenyl)benzoate + H(+) = a 2-(all-trans-polyprenyl)phenol + CO2. Its pathway is cofactor biosynthesis; ubiquinone biosynthesis. Functionally, catalyzes the decarboxylation of 3-octaprenyl-4-hydroxy benzoate to 2-octaprenylphenol, an intermediate step in ubiquinone biosynthesis. The polypeptide is 3-octaprenyl-4-hydroxybenzoate carboxy-lyase (Pseudomonas fluorescens (strain SBW25)).